Here is a 2801-residue protein sequence, read N- to C-terminus: Neurobeachin-like protein 2 (2801 aa).

The disordered stretch occupies residues 1379 to 1529 (RHEEEYEEEE…TISNTSNPQA (151 aa)). Residues 1383–1393 (EYEEEEGETQD) show a composition bias toward acidic residues. Polar residues-rich tracts occupy residues 1400–1413 (DLSQ…QLKN), 1424–1437 (GDQS…SNTV), 1470–1481 (KGPQTPVGSQPE), and 1500–1528 (SSSL…SNPQ). In terms of domain architecture, BEACH-type PH spans 1986–2086 (SQKEKLVLSE…VRNKVYSRIL (101 aa)). The 293-residue stretch at 2099 to 2391 (RSPQELLKAS…QLLKEPHPPR (293 aa)) folds into the BEACH domain. WD repeat units lie at residues 2431–2468 (LVQA…SWLP), 2492–2535 (RFLS…MLGK), 2538–2575 (LVGR…VWQV), 2588–2626 (RPIQ…VHSV), 2633–2676 (WTLR…RYAL), 2684–2719 (TLLA…IRDL), and 2727–2762 (APLA…VGAG).

Belongs to the WD repeat neurobeachin family.

It is found in the endoplasmic reticulum. Functionally, involved in thrombopoiesis. Plays a role in the development or secretion of alpha-granules, that contain several growth factors important for platelet biogenesis. The sequence is that of Neurobeachin-like protein 2 (nbeal2) from Danio rerio (Zebrafish).